The chain runs to 214 residues: Corrinoid adenosyltransferase (214 aa).

50–56 (GKGKGKS) lines the ATP pocket.

This sequence belongs to the Cob(I)alamin adenosyltransferase family. Monomer. The cofactor is Mn(2+).

The protein resides in the cytoplasm. The enzyme catalyses 2 cob(II)yrinate a,c diamide + reduced [electron-transfer flavoprotein] + 2 ATP = 2 adenosylcob(III)yrinate a,c-diamide + 2 triphosphate + oxidized [electron-transfer flavoprotein] + 3 H(+). It catalyses the reaction 2 cob(II)alamin + reduced [electron-transfer flavoprotein] + 2 ATP = 2 adenosylcob(III)alamin + 2 triphosphate + oxidized [electron-transfer flavoprotein] + 3 H(+). The protein operates within cofactor biosynthesis; adenosylcobalamin biosynthesis; adenosylcobalamin from cob(II)yrinate a,c-diamide: step 2/7. Functionally, required for both de novo synthesis of the corrin ring for the assimilation of exogenous corrinoids. Participates in the adenosylation of a variety of incomplete and complete corrinoids. The polypeptide is Corrinoid adenosyltransferase (cobO) (Sinorhizobium sp).